The sequence spans 196 residues: Orotate phosphoribosyltransferase (196 aa).

117–125 (EDIVTTGLS) is a 5-phospho-alpha-D-ribose 1-diphosphate binding site. Orotate-binding residues include T121 and R149.

Belongs to the purine/pyrimidine phosphoribosyltransferase family. PyrE subfamily. In terms of assembly, homodimer. It depends on Mg(2+) as a cofactor.

It carries out the reaction orotidine 5'-phosphate + diphosphate = orotate + 5-phospho-alpha-D-ribose 1-diphosphate. It functions in the pathway pyrimidine metabolism; UMP biosynthesis via de novo pathway; UMP from orotate: step 1/2. Functionally, catalyzes the transfer of a ribosyl phosphate group from 5-phosphoribose 1-diphosphate to orotate, leading to the formation of orotidine monophosphate (OMP). The chain is Orotate phosphoribosyltransferase from Methylorubrum populi (strain ATCC BAA-705 / NCIMB 13946 / BJ001) (Methylobacterium populi).